The chain runs to 1804 residues: Collagen alpha-1(XI) chain (1804 aa).

Residues Met-1–Gly-34 form the signal peptide. A propeptide spans Ala-35–Glu-511 (N-terminal propeptide). 2 cysteine pairs are disulfide-bonded: Cys-60–Cys-242 and Cys-181–Cys-235. In terms of domain architecture, Laminin G-like spans Asp-70–Cys-242. A nonhelical region region spans residues Lys-229–His-417. Polar residues predominate over residues Tyr-315–Pro-329. Disordered regions lie at residues Tyr-315 to Glu-334 and Glu-433 to Thr-506. A triple-helical region (interrupted) region spans residues Gly-418 to Thr-506. Residues Gly-440–Gly-488 form the Collagen-like 1 domain. Low complexity-rich tracts occupy residues Pro-447–Asp-465 and Leu-477–Pro-494. Residues Ile-507 to Ala-509 form a short nonhelical segment region. The tract at residues Gln-510 to Gly-527 is telopeptide. A disordered region spans residues Arg-526–Ile-1567. Collagen-like domains follow at residues Gly-527–Gly-584 and Pro-567–Gly-623. A triple-helical region region spans residues Pro-528–Val-1540. Gly residues-rich tracts occupy residues Gly-539–Gly-548 and Gly-581–Gly-590. At Lys-610 the chain carries Allysine. Over residues Pro-639–Arg-655 the composition is skewed to low complexity. The segment covering Gln-697–Pro-708 has biased composition (pro residues). Residues Gln-715 to Ala-726 show a composition bias toward low complexity. Positions Gly-728–Asp-781 constitute a Collagen-like 4 domain. A compositionally biased stretch (basic and acidic residues) spans Arg-805–Lys-814. Composition is skewed to low complexity over residues Lys-873 to Lys-901, Arg-916 to Val-925, and Pro-969 to Ile-979. Over residues Gly-1040–Gly-1049 the composition is skewed to gly residues. Over residues Arg-1074 to Pro-1083 the composition is skewed to pro residues. A compositionally biased stretch (low complexity) spans Ala-1084–Val-1108. Positions Gly-1160–Gly-1169 are enriched in gly residues. Pro residues predominate over residues Met-1216 to Pro-1227. Composition is skewed to low complexity over residues Pro-1240–Val-1249 and Ala-1282–Pro-1296. Pro residues predominate over residues Gln-1341–Arg-1360. 2 stretches are compositionally biased toward low complexity: residues Ala-1383–Pro-1392 and Gln-1417–Asp-1426. 2 Collagen-like domains span residues Gly-1427–Ala-1482 and Gly-1481–Glu-1539. Residues Pro-1428 to Leu-1437 are compositionally biased toward pro residues. Position 1450 is an allysine (Lys-1450). Over residues Pro-1453–Pro-1462 the composition is skewed to low complexity. A compositionally biased stretch (gly residues) spans Gly-1481–Gly-1490. The segment covering Pro-1491–Ala-1507 has biased composition (pro residues). Residues Pro-1509 to Thr-1519 are compositionally biased toward low complexity. A compositionally biased stretch (pro residues) spans Pro-1528–Pro-1537. Residues Ile-1541 to Gly-1561 form a nonhelical region (C-terminal) region. A propeptide spans Asp-1562–Gly-1804 (C-terminal propeptide). A Fibrillar collagen NC1 domain is found at Glu-1575–Leu-1803. A disulfide bridge links Cys-1605 with Cys-1637. Ca(2+) contacts are provided by Asp-1623, Asn-1625, Gln-1626, Cys-1628, and Asp-1631. Asn-1638 carries N-linked (GlcNAc...) asparagine glycosylation. Intrachain disulfides connect Cys-1646–Cys-1801 and Cys-1712–Cys-1755.

This sequence belongs to the fibrillar collagen family. Trimers composed of three different chains: alpha 1(XI), alpha 2(XI), and alpha 3(XI). Alpha 3(XI) is a post-translational modification of alpha 1(II). Alpha 1(V) can also be found instead of alpha 3(XI)=1(II). Post-translationally, prolines at the third position of the tripeptide repeating unit (G-X-Y) are hydroxylated in some or all of the chains. N-glycosylated.

The protein localises to the secreted. It localises to the extracellular space. Its subcellular location is the extracellular matrix. In terms of biological role, may play an important role in fibrillogenesis by controlling lateral growth of collagen II fibrils. The protein is Collagen alpha-1(XI) chain (Col11a1) of Mus musculus (Mouse).